We begin with the raw amino-acid sequence, 247 residues long: Carboxy-S-adenosyl-L-methionine synthase (247 aa).

S-adenosyl-L-methionine contacts are provided by residues tyrosine 39, 64–66 (GCS), 89–90 (DN), 117–118 (DI), asparagine 132, and arginine 199.

The protein belongs to the class I-like SAM-binding methyltransferase superfamily. Cx-SAM synthase family. Homodimer.

It carries out the reaction prephenate + S-adenosyl-L-methionine = carboxy-S-adenosyl-L-methionine + 3-phenylpyruvate + H2O. Catalyzes the conversion of S-adenosyl-L-methionine (SAM) to carboxy-S-adenosyl-L-methionine (Cx-SAM). This chain is Carboxy-S-adenosyl-L-methionine synthase, found in Citrobacter koseri (strain ATCC BAA-895 / CDC 4225-83 / SGSC4696).